A 483-amino-acid chain; its full sequence is MADLASRITKPDEAPAAAPEAAPVSAPASEEPKAPENETSIEESQSNLVKNEYEVEIKLSDLQNDTESPLYSVSSFDELGLPEAVNRGLLAINFKKPSKVQEKCLPLMLSDPPRNMIAQSQSGTGKTAAFVLTVLSRIDLSKPHQPQALLLAPSRELARQIQTVVQTIGQFCENLIVEAAIPGAISRETGVRGSVVVGTPGTVMDLVKRRQFDISQLKVLVIDEADNMLDQQGLGDQCVRVKNMLPKTIQILLFSATFPDKVLRFAERFAPNANQMKLKHKELTVKGISQMFMDCPTEKDKYDILCKLYGLMTIGSSVIFVRTRETANEIQKRMEADGHKVSALHGAYEGQSRDVLLDEFRSGRSKVLITTNVLARGIDVSSVSMVINYDIPMKGPGEREPDAETYLHRIGRTGRFGRVGVSISFVHDRRSFEALSQIAQFYGIDLIQLNPNDLDDTERKVQEVIKSSRAQAEYVPSATDSAV.

Positions 1–47 (MADLASRITKPDEAPAAAPEAAPVSAPASEEPKAPENETSIEESQSN) are disordered. The span at 14–29 (APAAAPEAAPVSAPAS) shows a compositional bias: low complexity. The Q motif motif lies at 74 to 102 (SSFDELGLPEAVNRGLLAINFKKPSKVQE). Positions 107–276 (LMLSDPPRNM…ERFAPNANQM (170 aa)) constitute a Helicase ATP-binding domain. Position 120 to 127 (120 to 127 (SQSGTGKT)) interacts with ATP. The DEAD box signature appears at 223–226 (DEAD). The 152-residue stretch at 304 to 455 (ILCKLYGLMT…LIQLNPNDLD (152 aa)) folds into the Helicase C-terminal domain.

The protein belongs to the DEAD box helicase family. DDX19/DBP5 subfamily. Associates with the nuclear pore complex.

The protein resides in the cytoplasm. It localises to the nucleus. Its subcellular location is the nuclear pore complex. The protein localises to the nucleus membrane. It catalyses the reaction ATP + H2O = ADP + phosphate + H(+). In terms of biological role, ATP-dependent RNA helicase associated with the nuclear pore complex and essential for mRNA export from the nucleus. May participate in a terminal step of mRNA export through the removal of proteins that accompany mRNA through the nucleopore complex. May also be involved in early transcription. This Neurospora crassa (strain ATCC 24698 / 74-OR23-1A / CBS 708.71 / DSM 1257 / FGSC 987) protein is ATP-dependent RNA helicase dbp-5 (dbp-5).